Consider the following 299-residue polypeptide: HTH-type transcriptional regulator CrgA (299 aa).

One can recognise an HTH lysR-type domain in the interval 1–60; it reads MKTNSEELTVFVQVVESGSFSRAAEQLAMANSAVSRIVKRLEEKLGVNLLNRTTRQLSLT. The H-T-H motif DNA-binding region spans 20-39; that stretch reads FSRAAEQLAMANSAVSRIVK.

Belongs to the LysR transcriptional regulatory family. In terms of assembly, forms oligomers. Oligomerization is required for DNA binding.

Functionally, involved in the regulation of bacterial adhesion to host epithelial cells. May play a central regulatory role in meningococcal adhesion, particularly in switching from initial adhesion to intimate adhesion by downregulating the bacterial surface structures that hinder this adhesion. During intimate adhesion, negatively regulates the expression of pilC1, encoding a pilus-associated protein, pilE, encoding the pilin, and sia genes, encoding the capsule. Also negatively regulates its own expression. May also regulate other genes that are involved in intimate adhesion. Binds specifically to the promoter region of pilC1 and crgA (both harboring a CREN element), and pilE and sia (both devoid of a CREN element). Acts through interaction with RNA polymerase (RNAP). Interaction with RNAP leads to the production of short abortive transcripts, suggesting that CrgA may act by preventing RNAP from clearing the promoter. The chain is HTH-type transcriptional regulator CrgA from Neisseria meningitidis serogroup C (strain 8013).